Consider the following 424-residue polypeptide: Serine--tRNA ligase (424 aa).

230–232 is a binding site for L-serine; it reads TAE. Residue 261–263 coordinates ATP; the sequence is RSE. Residue Glu-284 participates in L-serine binding. 348 to 351 is an ATP binding site; that stretch reads EISS. Ser-384 is a binding site for L-serine.

The protein belongs to the class-II aminoacyl-tRNA synthetase family. Type-1 seryl-tRNA synthetase subfamily. As to quaternary structure, homodimer. The tRNA molecule binds across the dimer.

The protein resides in the cytoplasm. It catalyses the reaction tRNA(Ser) + L-serine + ATP = L-seryl-tRNA(Ser) + AMP + diphosphate + H(+). The catalysed reaction is tRNA(Sec) + L-serine + ATP = L-seryl-tRNA(Sec) + AMP + diphosphate + H(+). It participates in aminoacyl-tRNA biosynthesis; selenocysteinyl-tRNA(Sec) biosynthesis; L-seryl-tRNA(Sec) from L-serine and tRNA(Sec): step 1/1. Its function is as follows. Catalyzes the attachment of serine to tRNA(Ser). Is also able to aminoacylate tRNA(Sec) with serine, to form the misacylated tRNA L-seryl-tRNA(Sec), which will be further converted into selenocysteinyl-tRNA(Sec). This chain is Serine--tRNA ligase, found in Streptococcus pneumoniae serotype 4 (strain ATCC BAA-334 / TIGR4).